The sequence spans 53 residues: Large ribosomal subunit protein bL32 (53 aa).

The segment covering 1 to 20 (MAVPKRRVSHTRAAKRRTHY) has biased composition (basic residues). The disordered stretch occupies residues 1–53 (MAVPKRRVSHTRAAKRRTHYKLTLPMPVKDADGTWRMPHHMNMTTGEYKTTKA). The span at 42–53 (NMTTGEYKTTKA) shows a compositional bias: polar residues.

This sequence belongs to the bacterial ribosomal protein bL32 family.

The chain is Large ribosomal subunit protein bL32 from Sulfurovum sp. (strain NBC37-1).